We begin with the raw amino-acid sequence, 205 residues long: High frequency lysogenization protein HflD homolog (205 aa).

Belongs to the HflD family.

The protein localises to the cytoplasm. The protein resides in the cell inner membrane. This Shewanella sp. (strain ANA-3) protein is High frequency lysogenization protein HflD homolog.